A 468-amino-acid polypeptide reads, in one-letter code: Ribosomal protein uS12 methylthiotransferase RimO (468 aa).

The region spanning 16 to 130 (NKIHFISLGC…ILSAIESRES (115 aa)) is the MTTase N-terminal domain. Residues cysteine 25, cysteine 61, cysteine 93, cysteine 164, cysteine 168, and cysteine 171 each coordinate [4Fe-4S] cluster. The Radical SAM core domain maps to 150-382 (STPKHYAYLK…SQIQKRNVDK (233 aa)). Positions 385-455 (QKLIGEKIEA…GYDLVGRVVK (71 aa)) constitute a TRAM domain.

Belongs to the methylthiotransferase family. RimO subfamily. [4Fe-4S] cluster is required as a cofactor.

The protein localises to the cytoplasm. The enzyme catalyses L-aspartate(89)-[ribosomal protein uS12]-hydrogen + (sulfur carrier)-SH + AH2 + 2 S-adenosyl-L-methionine = 3-methylsulfanyl-L-aspartate(89)-[ribosomal protein uS12]-hydrogen + (sulfur carrier)-H + 5'-deoxyadenosine + L-methionine + A + S-adenosyl-L-homocysteine + 2 H(+). Functionally, catalyzes the methylthiolation of an aspartic acid residue of ribosomal protein uS12. In Chlamydia pneumoniae (Chlamydophila pneumoniae), this protein is Ribosomal protein uS12 methylthiotransferase RimO.